Consider the following 262-residue polypeptide: Tetrahydromethanopterin S-methyltransferase subunit C (262 aa).

6 consecutive transmembrane segments (helical) span residues 35–57, 70–92, 97–119, 140–162, 172–194, and 214–236; these read FVPS…AGAN, GVPS…GVLI, GLPV…FIVG, LSLM…FSAD, GVIA…ACIG, and WLIF…FWLY.

Belongs to the MtrC family. As to quaternary structure, the complex is composed of 8 subunits; MtrA, MtrB, MtrC, MtrD, MtrE, MtrF, MtrG and MtrH.

It localises to the cell membrane. It carries out the reaction 5-methyl-5,6,7,8-tetrahydromethanopterin + coenzyme M + 2 Na(+)(in) = 5,6,7,8-tetrahydromethanopterin + methyl-coenzyme M + 2 Na(+)(out). The protein operates within one-carbon metabolism; methanogenesis from CO(2); methyl-coenzyme M from 5,10-methylene-5,6,7,8-tetrahydromethanopterin: step 2/2. Functionally, part of a complex that catalyzes the formation of methyl-coenzyme M and tetrahydromethanopterin from coenzyme M and methyl-tetrahydromethanopterin. This is an energy-conserving, sodium-ion translocating step. The chain is Tetrahydromethanopterin S-methyltransferase subunit C from Methanococcus maripaludis (strain DSM 14266 / JCM 13030 / NBRC 101832 / S2 / LL).